Reading from the N-terminus, the 229-residue chain is Tubulin-specific chaperone B (229 aa).

In terms of domain architecture, CAP-Gly spans 170-212 (GATKFKEGVWVGVKYDEPVGKNDGSVAGVRYFDCDPKYGGFVR).

This sequence belongs to the TBCB family. As to quaternary structure, supercomplex made of cofactors A to E. Cofactors A and D function by capturing and stabilizing tubulin in a quasi-native conformation. Cofactor E binds to the cofactor D-tubulin complex; interaction with cofactor C then causes the release of tubulin polypeptides that are committed to the native state.

Its subcellular location is the cytoplasm. It localises to the cytoskeleton. Binds to alpha-tubulin folding intermediates after their interaction with cytosolic chaperonin in the pathway leading from newly synthesized tubulin to properly folded heterodimer. In Caenorhabditis elegans, this protein is Tubulin-specific chaperone B.